Here is a 92-residue protein sequence, read N- to C-terminus: MEISSDNPDHGFQFPGTFELSAMGTAERGLETELPRLLAATGVELLEESISWKHSSSGKYVSVRIGFRADTREQFDSAHQALREHPEVKWTL.

Belongs to the UPF0250 family.

The polypeptide is UPF0250 protein XCC3453 (Xanthomonas campestris pv. campestris (strain ATCC 33913 / DSM 3586 / NCPPB 528 / LMG 568 / P 25)).